The chain runs to 188 residues: Elongation factor P (188 aa).

Residue K34 is modified to N6-(3,6-diaminohexanoyl)-5-hydroxylysine.

It belongs to the elongation factor P family. In terms of processing, may be beta-lysylated on the epsilon-amino group of Lys-34 by the combined action of EpmA and EpmB, and then hydroxylated on the C5 position of the same residue by EpmC (if this protein is present). Lysylation is critical for the stimulatory effect of EF-P on peptide-bond formation. The lysylation moiety may extend toward the peptidyltransferase center and stabilize the terminal 3-CCA end of the tRNA. Hydroxylation of the C5 position on Lys-34 may allow additional potential stabilizing hydrogen-bond interactions with the P-tRNA.

The protein resides in the cytoplasm. Its pathway is protein biosynthesis; polypeptide chain elongation. Its function is as follows. Involved in peptide bond synthesis. Alleviates ribosome stalling that occurs when 3 or more consecutive Pro residues or the sequence PPG is present in a protein, possibly by augmenting the peptidyl transferase activity of the ribosome. Modification of Lys-34 is required for alleviation. The protein is Elongation factor P of Pseudoalteromonas translucida (strain TAC 125).